A 390-amino-acid polypeptide reads, in one-letter code: Succinate--CoA ligase [ADP-forming] subunit beta (390 aa).

Positions 9 to 244 constitute an ATP-grasp domain; sequence KEIFREYGVP…LSEEDPVEVE (236 aa). ATP-binding positions include Lys46, 53 to 55, Glu99, Ala102, and Glu107; that span reads GRG. Mg(2+)-binding residues include Asn199 and Asp213. Residues Asn264 and 321 to 323 contribute to the substrate site; that span reads GIV.

This sequence belongs to the succinate/malate CoA ligase beta subunit family. Heterotetramer of two alpha and two beta subunits. It depends on Mg(2+) as a cofactor.

The catalysed reaction is succinate + ATP + CoA = succinyl-CoA + ADP + phosphate. It carries out the reaction GTP + succinate + CoA = succinyl-CoA + GDP + phosphate. It participates in carbohydrate metabolism; tricarboxylic acid cycle; succinate from succinyl-CoA (ligase route): step 1/1. Succinyl-CoA synthetase functions in the citric acid cycle (TCA), coupling the hydrolysis of succinyl-CoA to the synthesis of either ATP or GTP and thus represents the only step of substrate-level phosphorylation in the TCA. The beta subunit provides nucleotide specificity of the enzyme and binds the substrate succinate, while the binding sites for coenzyme A and phosphate are found in the alpha subunit. The sequence is that of Succinate--CoA ligase [ADP-forming] subunit beta from Nitratiruptor sp. (strain SB155-2).